The chain runs to 524 residues: MIKQALLSVSDKTGIVDFARELNALGVTLLSTGGTAKLLAEAGLPVTEVADYTGFPEMLDGRVKTLHPKVHGGILARRDLPEHMAALAEHNIPTIDLLVVNLYPFQQTVAKDDCTLPDAIENIDIGGPTMLRSAAKNHRDVTVIVDPADYAVVLGEMRANGNSVGYDTNFRLATKVFAHTAQYDGAITNYLTSLGADKSHQARSAYPQTLNLAFEKVQEMRYGENPHQSAAFYRDLKAFDGALANYVQLQGKELSYNNIADADAAWECVKSFDAANSAACVIIKHANPCGVAVGANALEAYDKAFKTDSTSAFGGIIAFNVELDEAAAQAVAKQFVEVLIAPSFSAAARNVFAAKQNVRLLEIPLGKGVNQYDLKRVGGGLLVQGPDARNVQPSELRVVTRRHPTPKEMDDLMFAWRVAKFVKSNAIVFCGNGMTLGVGAGQMSRVDSARIASIKAQNAGLTLAGSAVASDAFFPFRDGLDVVVDAGATCVIQPGGSMRDDEVIAAADERGIAMVLTGTRHFRH.

Residues 1–145 (MIKQALLSVS…KNHRDVTVIV (145 aa)) enclose the MGS-like domain.

It belongs to the PurH family.

The enzyme catalyses (6R)-10-formyltetrahydrofolate + 5-amino-1-(5-phospho-beta-D-ribosyl)imidazole-4-carboxamide = 5-formamido-1-(5-phospho-D-ribosyl)imidazole-4-carboxamide + (6S)-5,6,7,8-tetrahydrofolate. The catalysed reaction is IMP + H2O = 5-formamido-1-(5-phospho-D-ribosyl)imidazole-4-carboxamide. The protein operates within purine metabolism; IMP biosynthesis via de novo pathway; 5-formamido-1-(5-phospho-D-ribosyl)imidazole-4-carboxamide from 5-amino-1-(5-phospho-D-ribosyl)imidazole-4-carboxamide (10-formyl THF route): step 1/1. It participates in purine metabolism; IMP biosynthesis via de novo pathway; IMP from 5-formamido-1-(5-phospho-D-ribosyl)imidazole-4-carboxamide: step 1/1. The sequence is that of Bifunctional purine biosynthesis protein PurH from Cupriavidus metallidurans (strain ATCC 43123 / DSM 2839 / NBRC 102507 / CH34) (Ralstonia metallidurans).